Consider the following 285-residue polypeptide: Isoprenyl transferase 2 (285 aa).

A disordered region spans residues 11–30; sequence RREYRAPEPHPSGARAPKLP. Residue D43 is part of the active site. Position 43 (D43) interacts with Mg(2+). Residues 44 to 47, W48, R56, H60, and 88 to 90 each bind substrate; these read GNGR and STE. The active-site Proton acceptor is N91. Substrate contacts are provided by residues W92, R94, R211, and 217 to 219; that span reads RTS. E230 is a Mg(2+) binding site.

It belongs to the UPP synthase family. As to quaternary structure, homodimer. The cofactor is Mg(2+).

Its function is as follows. Catalyzes the condensation of isopentenyl diphosphate (IPP) with allylic pyrophosphates generating different type of terpenoids. The polypeptide is Isoprenyl transferase 2 (Streptomyces avermitilis (strain ATCC 31267 / DSM 46492 / JCM 5070 / NBRC 14893 / NCIMB 12804 / NRRL 8165 / MA-4680)).